Consider the following 63-residue polypeptide: Cytochrome c oxidase subunit 5A, mitochondrial (63 aa).

Belongs to the cytochrome c oxidase subunit 5A family. Component of the cytochrome c oxidase (complex IV, CIV), a multisubunit enzyme composed of a catalytic core of 3 subunits and several supernumerary subunits. The complex exists as a monomer or a dimer and forms supercomplexes (SCs) in the inner mitochondrial membrane with ubiquinol-cytochrome c oxidoreductase (cytochrome b-c1 complex, complex III, CIII).

It localises to the mitochondrion inner membrane. It functions in the pathway energy metabolism; oxidative phosphorylation. Functionally, component of the cytochrome c oxidase, the last enzyme in the mitochondrial electron transport chain which drives oxidative phosphorylation. The respiratory chain contains 3 multisubunit complexes succinate dehydrogenase (complex II, CII), ubiquinol-cytochrome c oxidoreductase (cytochrome b-c1 complex, complex III, CIII) and cytochrome c oxidase (complex IV, CIV), that cooperate to transfer electrons derived from NADH and succinate to molecular oxygen, creating an electrochemical gradient over the inner membrane that drives transmembrane transport and the ATP synthase. Cytochrome c oxidase is the component of the respiratory chain that catalyzes the reduction of oxygen to water. Electrons originating from reduced cytochrome c in the intermembrane space (IMS) are transferred via the dinuclear copper A center (CU(A)) of subunit 2 and heme A of subunit 1 to the active site in subunit 1, a binuclear center (BNC) formed by heme A3 and copper B (CU(B)). The BNC reduces molecular oxygen to 2 water molecules using 4 electrons from cytochrome c in the IMS and 4 protons from the mitochondrial matrix. The polypeptide is Cytochrome c oxidase subunit 5A, mitochondrial (COVA) (Manduca sexta (Tobacco hawkmoth)).